The chain runs to 272 residues: Phosphate import ATP-binding protein PstB (272 aa).

The region spanning 26-267 (IVVKNWNLYY…PQVKRTEDYI (242 aa)) is the ABC transporter domain. 58–65 (GPSGCGKS) is an ATP binding site.

Belongs to the ABC transporter superfamily. Phosphate importer (TC 3.A.1.7) family. As to quaternary structure, the complex is composed of two ATP-binding proteins (PstB), two transmembrane proteins (PstC and PstA) and a solute-binding protein (PstS).

It localises to the cell inner membrane. It catalyses the reaction phosphate(out) + ATP + H2O = ADP + 2 phosphate(in) + H(+). Part of the ABC transporter complex PstSACB involved in phosphate import. Responsible for energy coupling to the transport system. The protein is Phosphate import ATP-binding protein PstB of Hydrogenovibrio crunogenus (strain DSM 25203 / XCL-2) (Thiomicrospira crunogena).